We begin with the raw amino-acid sequence, 953 residues long: Coatomer subunit beta (953 aa).

HEAT repeat units lie at residues 17 to 54 (DSEP…NGEK), 96 to 131 (QEMI…KEAE), 132 to 168 (LLEP…NFEH), 240 to 276 (SERA…SAPT), 277 to 314 (AIKA…HPSH), 316 to 353 (RVLQ…SRNV), and 396 to 433 (DMAA…RFDN).

In terms of assembly, oligomeric complex that consists of at least the alpha, beta, beta', gamma, delta, epsilon and zeta subunits.

It localises to the cytoplasm. The protein resides in the golgi apparatus membrane. Its subcellular location is the cytoplasmic vesicle. The protein localises to the COPI-coated vesicle membrane. In terms of biological role, the coatomer is a cytosolic protein complex that binds to dilysine motifs and reversibly associates with Golgi non-clathrin-coated vesicles, which further mediate biosynthetic protein transport from the ER, via the Golgi up to the trans Golgi network. Coatomer complex is required for budding from Golgi membranes, and is essential for the retrograde Golgi-to-ER transport of dilysine-tagged proteins. This is Coatomer subunit beta (COPB1) from Gallus gallus (Chicken).